We begin with the raw amino-acid sequence, 523 residues long: Melanoma-associated antigen E2 (523 aa).

MAGE domains lie at 88-288 (LEDR…YNKA) and 311-502 (MNDK…YREA).

The sequence is that of Melanoma-associated antigen E2 (MAGEE2) from Homo sapiens (Human).